Consider the following 199-residue polypeptide: MLDREGYRPNVGIVLLNSRNEVFWGKRVGQHSWQFPQGGIQHGESPEQAMYRELHEEVGLLPEHVQIIGRTRDWLRYDVPEEYLRRQHATRVHRAAYRGQKQIWFLLRLVGLDSDIQLRASEHPEFDAWRWVPFWIQLDAVIGFKREVYELALSELARYLSRGVRMHQLAWGSPLDLLQSFYSKGEEGSPESSKTDKSK.

One can recognise a Nudix hydrolase domain in the interval 6 to 154; that stretch reads GYRPNVGIVL…KREVYELALS (149 aa). The Nudix box motif lies at 38–59; the sequence is GGIQHGESPEQAMYRELHEEVG.

Belongs to the Nudix hydrolase family. RppH subfamily. The cofactor is a divalent metal cation.

Functionally, accelerates the degradation of transcripts by removing pyrophosphate from the 5'-end of triphosphorylated RNA, leading to a more labile monophosphorylated state that can stimulate subsequent ribonuclease cleavage. This chain is RNA pyrophosphohydrolase, found in Polynucleobacter asymbioticus (strain DSM 18221 / CIP 109841 / QLW-P1DMWA-1) (Polynucleobacter necessarius subsp. asymbioticus).